The sequence spans 179 residues: dCTP deaminase (179 aa).

DCTP contacts are provided by residues 101 to 106 (RSTLAR) and D117. Residue E127 is the Proton donor/acceptor of the active site. Q165 serves as a coordination point for dCTP.

The protein belongs to the dCTP deaminase family. Homotrimer.

The catalysed reaction is dCTP + H2O + H(+) = dUTP + NH4(+). The protein operates within pyrimidine metabolism; dUMP biosynthesis; dUMP from dCTP (dUTP route): step 1/2. In terms of biological role, catalyzes the deamination of dCTP to dUTP. This is dCTP deaminase from Caldivirga maquilingensis (strain ATCC 700844 / DSM 13496 / JCM 10307 / IC-167).